The sequence spans 106 residues: MTSATQFDNVSVVKRANVYFDGKCVSHTVLFPDGTRKTLGVILPCALNFGTDAAELMEVQAGKCRVKLDGSSEWQTYGAGESFSVPGKSRFDIEVLETLDYVCSYL.

It belongs to the nucleoside phosphorylase PpnP family.

The enzyme catalyses a purine D-ribonucleoside + phosphate = a purine nucleobase + alpha-D-ribose 1-phosphate. It catalyses the reaction adenosine + phosphate = alpha-D-ribose 1-phosphate + adenine. It carries out the reaction cytidine + phosphate = cytosine + alpha-D-ribose 1-phosphate. The catalysed reaction is guanosine + phosphate = alpha-D-ribose 1-phosphate + guanine. The enzyme catalyses inosine + phosphate = alpha-D-ribose 1-phosphate + hypoxanthine. It catalyses the reaction thymidine + phosphate = 2-deoxy-alpha-D-ribose 1-phosphate + thymine. It carries out the reaction uridine + phosphate = alpha-D-ribose 1-phosphate + uracil. The catalysed reaction is xanthosine + phosphate = alpha-D-ribose 1-phosphate + xanthine. Functionally, catalyzes the phosphorolysis of diverse nucleosides, yielding D-ribose 1-phosphate and the respective free bases. Can use uridine, adenosine, guanosine, cytidine, thymidine, inosine and xanthosine as substrates. Also catalyzes the reverse reactions. This chain is Pyrimidine/purine nucleoside phosphorylase, found in Burkholderia ambifaria (strain MC40-6).